The following is a 98-amino-acid chain: C-C motif chemokine 19 (98 aa).

Residues Met1–Ser21 form the signal peptide. 2 cysteine pairs are disulfide-bonded: Cys29-Cys55 and Cys30-Cys71.

Belongs to the intercrine beta (chemokine CC) family. As to quaternary structure, interacts with TNFAIP6 (via Link domain). Expressed at high levels in the lymph nodes, thymus and appendix. Intermediate levels seen in colon and trachea, while low levels found in spleen, small intestine, lung, kidney and stomach.

It is found in the secreted. In terms of biological role, may play a role not only in inflammatory and immunological responses but also in normal lymphocyte recirculation and homing. May play an important role in trafficking of T-cells in thymus, and T-cell and B-cell migration to secondary lymphoid organs. Binds to chemokine receptor CCR7. Recombinant CCL19 shows potent chemotactic activity for T-cells and B-cells but not for granulocytes and monocytes. Binds to atypical chemokine receptor ACKR4 and mediates the recruitment of beta-arrestin (ARRB1/2) to ACKR4. This is C-C motif chemokine 19 (CCL19) from Homo sapiens (Human).